The primary structure comprises 157 residues: Transcription antitermination protein NusB (157 aa).

It belongs to the NusB family.

Its function is as follows. Involved in transcription antitermination. Required for transcription of ribosomal RNA (rRNA) genes. Binds specifically to the boxA antiterminator sequence of the ribosomal RNA (rrn) operons. The protein is Transcription antitermination protein NusB of Helicobacter hepaticus (strain ATCC 51449 / 3B1).